The following is a 262-amino-acid chain: Thrombin-like enzyme gyroxin B1.4 (262 aa).

Positions 1–18 (MVLIRVLANLLILQLSYA) are cleaved as a signal peptide. The propeptide occupies 19–262 (QKSSELVIGG…AGNTIVNCPP (244 aa)). The Peptidase S1 domain maps to 25–253 (VIGGDECNIN…HLDWIQSIIA (229 aa)). Intrachain disulfides connect Cys-31–Cys-165, Cys-52–Cys-68, Cys-102–Cys-260, Cys-144–Cys-214, Cys-176–Cys-193, and Cys-204–Cys-229. His-67 (charge relay system) is an active-site residue. Residue Asn-105 is glycosylated (N-linked (GlcNAc...) asparagine). The active-site Charge relay system is Asp-112. Ser-208 (charge relay system) is an active-site residue.

It belongs to the peptidase S1 family. Snake venom subfamily. As to quaternary structure, monomer. In terms of tissue distribution, expressed by the venom gland.

The protein localises to the secreted. In terms of biological role, thrombin-like snake venom serine protease. Displays a specificity similar to trypsin. Releases only fibrinopeptide A in the conversion of fibrinogen to fibrin. Shows coagulant, esterase and amidase activities. Reversibly increases the permeability of the blood brain barrier (BBB) in mice. Induces the barrel rotation syndrome in mice, which is manifested by gyroxin-like, rapid rolling motions. This syndrome may be due to its effect on BBB permeability, and certainly also to other actions affecting endogenous substrates present in the endothelium, nervous tissues or blood. This is Thrombin-like enzyme gyroxin B1.4 from Crotalus durissus terrificus (South American rattlesnake).